The following is a 113-amino-acid chain: Hydrogenase maturation factor HypA (113 aa).

Histidine 2 is a binding site for Ni(2+). Zn(2+) is bound by residues cysteine 73, cysteine 76, cysteine 89, and cysteine 92.

It belongs to the HypA/HybF family.

In terms of biological role, involved in the maturation of [NiFe] hydrogenases. Required for nickel insertion into the metal center of the hydrogenase. The sequence is that of Hydrogenase maturation factor HypA from Albidiferax ferrireducens (strain ATCC BAA-621 / DSM 15236 / T118) (Rhodoferax ferrireducens).